A 1133-amino-acid chain; its full sequence is Protein TOPLESS-RELATED PROTEIN 2 (1133 aa).

Positions 4-36 (LSRELVFLILQFLDEEKFKETVHKLEQESAFYF) constitute a LisH domain. The region spanning 34–92 (FYFNMKHFEDLVQGGEWDEVEKYLSGFTKVEDNRYSMKIFFEIRKQKYLEALDRHDRAK) is the CTLH domain. WD repeat units follow at residues 344-384 (NQGS…RIAH), 451-492 (AHIG…KQYT), 495-536 (GHEA…SRVD), 539-582 (APGH…IKRT), 586-625 (FRKR…ILTT), 630-669 (GGLP…RLLR), 771-810 (ATSS…RNPN), 838-876 (NPEE…VMTT), 879-919 (APPP…VKSK), 922-961 (GHSK…KKKS), 970-1011 (RSGA…RSWS), and 1015-1054 (ALPA…LRCR). A disordered region spans residues 1102 to 1133 (DSDPKWGVAPPQDNGTHPTISAAPAAANKPEV).

In terms of assembly, tetramer. Interacts with D53, probably via the EAR motifs. Binds to AP2-1/TOE1, AP2-3/SNB and AP2-2/IDS1. Interacts with WOX1. Interacts with MOF1. In terms of tissue distribution, expressed in stems and panicles. Detected in roots, seeds, leaves and sheath. Expressed in the meristem and lateral organ primordia.

It is found in the nucleus. Transcriptional corepressor involved in branch formation regulation, presumably by suppressing primary branch formation and promoting secondary branch formation. Required for the cell elongation in the first internode and pollen development. Probable downstream regulator of strigolactones signaling important in axillary meristem maintenance. Acts in auxin signaling and is associated with the regulation of histone deacetylation. Essential for the function of miR172 microRNA and its target genes in regulating panicle development. The polypeptide is Protein TOPLESS-RELATED PROTEIN 2 (Oryza sativa subsp. japonica (Rice)).